We begin with the raw amino-acid sequence, 129 residues long: Serum amyloid A-1 protein (129 aa).

An N-terminal signal peptide occupies residues 1–18 (MKLFTGLIFCSLVLGVSS). The segment at 19 to 44 (QWYSFIGEAAQGAWDMYRAYSDMIEA) is important for amyloid formation. Residues 92-129 (GDSGHGVEDSKADQAANEWGRSGKDPNHFRPPGLPDKY) form a disordered region.

The protein belongs to the SAA family. Homohexamer; dimer of trimers. Can form amyloid fibrils after partial proteolysis; the native, undenatured protein does not form amyloid fibrils (in vitro). Apolipoprotein of the HDL complex. Binds to heparin. As to expression, detected in liver.

It localises to the secreted. In terms of biological role, major acute phase protein. The sequence is that of Serum amyloid A-1 protein (SAA1) from Neovison vison (American mink).